The chain runs to 206 residues: Recombination protein RecR (206 aa).

The C4-type zinc-finger motif lies at 60-75 (CAMCNTFCEGGLCDIC). Residues 83–178 (RRLMVVHMPA…KVSRLSQGIP (96 aa)) enclose the Toprim domain.

It belongs to the RecR family.

Functionally, may play a role in DNA repair. It seems to be involved in an RecBC-independent recombinational process of DNA repair. It may act with RecF and RecO. The polypeptide is Recombination protein RecR (Neisseria meningitidis serogroup B (strain ATCC BAA-335 / MC58)).